Consider the following 663-residue polypeptide: GPI mannosyltransferase 3 (663 aa).

Positions 1 to 11 (MPMSARSRRSN) are enriched in basic residues. A disordered region spans residues 1–44 (MPMSARSRRSNPRLPPSPSSSSSSDAVRASPHSSPPSRLRPPSA). The segment covering 19-42 (SSSSSSDAVRASPHSSPPSRLRPP) has biased composition (low complexity). 8 consecutive transmembrane segments (helical) span residues 47–67 (DVSS…ALTV), 110–130 (PLIF…LGLT), 137–157 (LLIA…DFYT), 226–246 (VLAV…FPPL), 269–289 (YASQ…LVGL), 304–324 (GSIL…LSVI), 335–355 (LLPA…IPAL), and 367–387 (LTLI…TLFH). Residues 492–512 (HIPRRPSYATPPSSQRQPTQL) form a disordered region. The segment covering 501 to 511 (TPPSSQRQPTQ) has biased composition (polar residues).

The protein belongs to the glycosyltransferase 22 family. PIGB subfamily.

Its subcellular location is the endoplasmic reticulum membrane. It participates in glycolipid biosynthesis; glycosylphosphatidylinositol-anchor biosynthesis. Functionally, mannosyltransferase involved in glycosylphosphatidylinositol-anchor biosynthesis. Transfers the third mannose to Man2-GlcN-acyl-PI during GPI precursor assembly. The protein is GPI mannosyltransferase 3 (gpi10) of Emericella nidulans (strain FGSC A4 / ATCC 38163 / CBS 112.46 / NRRL 194 / M139) (Aspergillus nidulans).